The primary structure comprises 301 residues: Probable 5-dehydro-4-deoxyglucarate dehydratase (301 aa).

The protein belongs to the DapA family.

It carries out the reaction 5-dehydro-4-deoxy-D-glucarate + H(+) = 2,5-dioxopentanoate + CO2 + H2O. Its pathway is carbohydrate acid metabolism; D-glucarate degradation; 2,5-dioxopentanoate from D-glucarate: step 2/2. This Rhizobium meliloti (strain 1021) (Ensifer meliloti) protein is Probable 5-dehydro-4-deoxyglucarate dehydratase.